Reading from the N-terminus, the 201-residue chain is CASP-like protein 2B2 (201 aa).

Topologically, residues 1–28 (MSYLGVGVSPGNVSGSTTKMKLIDRKVR) are cytoplasmic. The chain crosses the membrane as a helical span at residues 29–49 (VTELILRCLVCVLALVAAILI). Topologically, residues 50–71 (ATDVQVREIFMIQKKAKFTDMK) are extracellular. A helical transmembrane segment spans residues 72–92 (ALVLLVVVNGIAAGYSLVQAV). Residues 93 to 108 (RCVVGLMKGRVLFSKP) lie on the Cytoplasmic side of the membrane. Residues 109-129 (LAWAIFFGDQAVAYLCVAGVA) form a helical membrane-spanning segment. The Extracellular portion of the chain corresponds to 130 to 166 (AAAQSAAFAKLGEPELQWMKICNMYGKFCNQVGEGIA). Residues 167–187 (SALFACIGMVLISCISAFGVF) traverse the membrane as a helical segment. Over 188–201 (RLYGGSKSRPSSRW) the chain is Cytoplasmic.

The protein belongs to the Casparian strip membrane proteins (CASP) family. As to quaternary structure, homodimer and heterodimers.

The protein resides in the cell membrane. This chain is CASP-like protein 2B2, found in Arabidopsis thaliana (Mouse-ear cress).